We begin with the raw amino-acid sequence, 236 residues long: Small ribosomal subunit protein uS2c (236 aa).

The protein belongs to the universal ribosomal protein uS2 family.

It localises to the plastid. The protein resides in the chloroplast. This is Small ribosomal subunit protein uS2c (rps2) from Crucihimalaya wallichii (Rock-cress).